Reading from the N-terminus, the 155-residue chain is 2-C-methyl-D-erythritol 2,4-cyclodiphosphate synthase (155 aa).

Residues aspartate 8 and histidine 10 each coordinate a divalent metal cation. 4-CDP-2-C-methyl-D-erythritol 2-phosphate is bound by residues 8-10 (DVH) and 34-35 (HS). Residue histidine 42 coordinates a divalent metal cation. 4-CDP-2-C-methyl-D-erythritol 2-phosphate is bound by residues 56–58 (DIG), 61–65 (FPDTD), 100–106 (AQAPKMA), 132–135 (TTTE), phenylalanine 139, and arginine 142.

Belongs to the IspF family. As to quaternary structure, homotrimer. A divalent metal cation serves as cofactor.

The enzyme catalyses 4-CDP-2-C-methyl-D-erythritol 2-phosphate = 2-C-methyl-D-erythritol 2,4-cyclic diphosphate + CMP. It participates in isoprenoid biosynthesis; isopentenyl diphosphate biosynthesis via DXP pathway; isopentenyl diphosphate from 1-deoxy-D-xylulose 5-phosphate: step 4/6. In terms of biological role, involved in the biosynthesis of isopentenyl diphosphate (IPP) and dimethylallyl diphosphate (DMAPP), two major building blocks of isoprenoid compounds. Catalyzes the conversion of 4-diphosphocytidyl-2-C-methyl-D-erythritol 2-phosphate (CDP-ME2P) to 2-C-methyl-D-erythritol 2,4-cyclodiphosphate (ME-CPP) with a corresponding release of cytidine 5-monophosphate (CMP). The protein is 2-C-methyl-D-erythritol 2,4-cyclodiphosphate synthase of Saccharophagus degradans (strain 2-40 / ATCC 43961 / DSM 17024).